The primary structure comprises 239 residues: MEFTPSFEQGTLIKRYKRFLTDIRLEDGSEVTIHCPNTGSMRNCLFEGKKVWFSISDNPKRKYSRTWEQAESDCGDIIGINTGRANQLAEDAIKSGVITELQDYDLLKREVKYGSENSRIDILLTDNDSHNEPKPHCYIEVKSCTLLEDGQGYFPDAVTTRGQKHLRELMEMVSMGHRAVLLFVVQHTGIESVMAAKHIDPDYAELLSQAHQAGVEILAYNTEMSPNQASLLKSCPVKL.

It belongs to the SfsA family.

The protein is Sugar fermentation stimulation protein homolog of Shewanella woodyi (strain ATCC 51908 / MS32).